The sequence spans 88 residues: Putative septation protein SpoVG (88 aa).

This sequence belongs to the SpoVG family.

Functionally, could be involved in septation. This chain is Putative septation protein SpoVG, found in Desulforudis audaxviator (strain MP104C).